We begin with the raw amino-acid sequence, 327 residues long: Putative pumilio homolog 19 (327 aa).

In terms of domain architecture, PUM-HD spans 1 to 324 (MAVSDNTFSM…NIANILDTFR (324 aa)). Pumilio repeat units follow at residues 79–114 (SDSD…FCAA), 115–149 (ILRR…ALYE), 150–185 (RILY…DQLL), 186–222 (ELVV…NIAV), 223–260 (NLYG…ELLG), and 261–295 (CDGD…DLFW).

The protein localises to the cytoplasm. Functionally, sequence-specific RNA-binding protein that regulates translation and mRNA stability by binding the 3'-UTR of target mRNAs. This chain is Putative pumilio homolog 19 (APUM19), found in Arabidopsis thaliana (Mouse-ear cress).